Consider the following 825-residue polypeptide: NT-3 growth factor receptor (825 aa).

Residues 1 to 31 (MDVSLCPAKCSFWRIFLLGSVWLDYVGSVLA) form the signal peptide. 2 disulfides stabilise this stretch: Cys32/Cys38 and Cys36/Cys45. The Extracellular portion of the chain corresponds to 32–429 (CPANCVCSKT…TVTHKPEEDT (398 aa)). N-linked (GlcNAc...) asparagine glycosylation is found at Asn68, Asn72, and Asn79. LRR repeat units follow at residues 104 to 125 (GLQKLTIKNSGLRSIQPRAFAK) and 128 to 149 (HLRYINLSSNRLTTLSWQLFQT). N-linked (GlcNAc...) asparagine glycans are attached at residues Asn133 and Asn163. The LRRCT domain maps to 160–209 (NFFNCSCDIRWMQLWQEQGEARLNSQNLYCINADGSQLPLFRMNISQCDL). 2 disulfide bridges follow: Cys164–Cys189 and Cys166–Cys207. Residues Asn203, Asn218, Asn232, Asn259, Asn267, Asn272, and Asn294 are each glycosylated (N-linked (GlcNAc...) asparagine). 2 consecutive Ig-like C2-type domains span residues 210-300 (PEIS…VALT) and 309-382 (SLEE…IAKN). Cys231 and Cys284 are disulfide-bonded. A disulfide bond links Cys320 and Cys362. 2 N-linked (GlcNAc...) asparagine glycosylation sites follow: Asn375 and Asn388. The chain crosses the membrane as a helical span at residues 430–453 (FGVSIAVGLAAFACVLLVVLFIMI). Over 454-825 (NKYGRRSKFG…ATPIYLDILG (372 aa)) the chain is Cytoplasmic. Ser493 bears the Phosphoserine mark. The residue at position 516 (Tyr516) is a Phosphotyrosine; by autocatalysis. A Protein kinase domain is found at 538–825 (IVLKRELGEG…ATPIYLDILG (288 aa)). ATP is bound by residues 544–552 (LGEGAFGKV) and Lys572. The active-site Proton acceptor is Asp679. 3 positions are modified to phosphotyrosine; by autocatalysis: Tyr705, Tyr709, and Tyr710.

This sequence belongs to the protein kinase superfamily. Tyr protein kinase family. Insulin receptor subfamily. As to quaternary structure, exists in a dynamic equilibrium between monomeric (low affinity) and dimeric (high affinity) structures. Binds SH2B2. Interacts with SQSTM1 and KIDINS220. Interacts with PTPRS. Interacts with MAPK8IP3/JIP3. In terms of processing, ligand-mediated auto-phosphorylation.

Its subcellular location is the membrane. The enzyme catalyses L-tyrosyl-[protein] + ATP = O-phospho-L-tyrosyl-[protein] + ADP + H(+). Its function is as follows. Receptor tyrosine kinase involved in nervous system and probably heart development. Upon binding of its ligand NTF3/neurotrophin-3, NTRK3 autophosphorylates and activates different signaling pathways, including the phosphatidylinositol 3-kinase/AKT and the MAPK pathways, that control cell survival and differentiation. The chain is NT-3 growth factor receptor (NTRK3) from Saimiri boliviensis boliviensis (Bolivian squirrel monkey).